The sequence spans 424 residues: Protein ORF114 (424 aa).

The protein localises to the host cytoplasm. Its function is as follows. Plays a role in per os infectivity in vivo. Facilitates embedding of occlusion-derived viruses (ODVs) into occlusion bodies (OBs). In Lepidoptera (butterflies and moths), this protein is Protein ORF114.